The primary structure comprises 318 residues: Retinol dehydrogenase 5 (318 aa).

The helical transmembrane segment at 1 to 23 (MWLPLLLGALLWAVLWLLRDRQS) threads the bilayer. Over 24-288 (LPASDAFIFI…TRYSPGWDAK (265 aa)) the chain is Lumenal. 32–56 (FITGCDSGFGRLLALQLDQKGFQVL) lines the NADP(+) pocket. Ser163 contacts substrate. Catalysis depends on Tyr175, which acts as the Proton acceptor. The helical transmembrane segment at 289 to 309 (LLWLPASYLPARVVDAVLTWI) threads the bilayer. Residues 310–318 (LPRPAQSVS) lie on the Cytoplasmic side of the membrane.

This sequence belongs to the short-chain dehydrogenases/reductases (SDR) family. Homodimer. As to expression, expressed in eye, liver, kidney, brain, intestine, placenta, epididymus and submaxillary gland. In eye, strongly expressed in the retinal pigment epithelium, with lower expression levels detected in the inner segment of the photoreceptor cells and in the outer plexiform layer. In kidney, strong expression detected in the distal tubules and the transitional epithelium in the renal pelvis, with weaker expression detected in the epithelium of the outer stripe of the outer zone of the medulla. In liver, detected in hepatocytes in the centrilobular area. In lung, present in club cells in the epithelium of the bronchiole, in parenchyma and in cartilage surrounding the secondary bronchi. In skin, expressed in epidermis, hair follicles and mast cells in the dermis. Expressed in heart. Not detected in heart. Not detected in lung, spleen, skeletal muscle and testis.

It is found in the endoplasmic reticulum membrane. The catalysed reaction is 11-cis-retinol + NAD(+) = 11-cis-retinal + NADH + H(+). It catalyses the reaction 9-cis-retinol + NAD(+) = 9-cis-retinal + NADH + H(+). It carries out the reaction 13-cis-retinol + NAD(+) = 13-cis-retinal + NADH + H(+). The enzyme catalyses androsterone + NAD(+) = 5alpha-androstan-3,17-dione + NADH + H(+). The catalysed reaction is 5alpha-androstane-3alpha,17beta-diol + NAD(+) = 17beta-hydroxy-5alpha-androstan-3-one + NADH + H(+). It functions in the pathway cofactor metabolism; retinol metabolism. Inhibited by 9-cis-, 13-cis- and all-trans-retinoic acids, with the most potent inhibitor being 13-cis-retinoic acid. Weakly inhibited by oleic acid. In terms of biological role, catalyzes the oxidation of cis-isomers of retinol, including 11-cis-, 9-cis-, and 13-cis-retinol in an NAD-dependent manner. Has no activity towards all-trans retinal. Plays a significant role in 11-cis retinol oxidation in the retinal pigment epithelium cells (RPE). Also recognizes steroids (androsterone, androstanediol) as its substrates. The sequence is that of Retinol dehydrogenase 5 from Mus musculus (Mouse).